Here is a 389-residue protein sequence, read N- to C-terminus: Glutamate 5-kinase (389 aa).

Lysine 16 contacts ATP. 3 residues coordinate substrate: serine 56, aspartate 143, and asparagine 155. 175–176 lines the ATP pocket; it reads SD. The 78-residue stretch at 281 to 358 folds into the PUA domain; sequence AGELHVDEGA…AEIEAILGYA (78 aa).

It belongs to the glutamate 5-kinase family.

The protein resides in the cytoplasm. The enzyme catalyses L-glutamate + ATP = L-glutamyl 5-phosphate + ADP. The protein operates within amino-acid biosynthesis; L-proline biosynthesis; L-glutamate 5-semialdehyde from L-glutamate: step 1/2. In terms of biological role, catalyzes the transfer of a phosphate group to glutamate to form L-glutamate 5-phosphate. The sequence is that of Glutamate 5-kinase from Rhizobium etli (strain ATCC 51251 / DSM 11541 / JCM 21823 / NBRC 15573 / CFN 42).